The sequence spans 710 residues: Mitochondrial intermediate peptidase (710 aa).

A mitochondrion-targeting transit peptide spans 1–33 (MLLAAGTRYAYRLCGRRAAAALQGRAGRSCARS). The residue at position 124 (Lys124) is an N6-acetyllysine. His492 is a binding site for Zn(2+). Glu493 is a catalytic residue. 2 residues coordinate Zn(2+): His496 and His499.

Belongs to the peptidase M3 family. In terms of assembly, monomer. Requires Zn(2+) as cofactor.

It is found in the mitochondrion matrix. The enzyme catalyses Release of an N-terminal octapeptide as second stage of processing of some proteins imported into the mitochondrion.. Its activity is regulated as follows. Activity is divalent cation-dependent. It is stimulated by manganese, magnesium or calcium ions and reversibly inhibited by zinc, cobalt and iron. Cleaves proteins, imported into the mitochondrion, to their mature size. This Rattus norvegicus (Rat) protein is Mitochondrial intermediate peptidase (Mipep).